A 146-amino-acid chain; its full sequence is Thyroid hormone-inducible hepatic protein (146 aa).

The disordered stretch occupies residues 83-104 (KVAGSEENGTAETEEVEDESAS). Over residues 94–104 (ETEEVEDESAS) the composition is skewed to acidic residues.

This sequence belongs to the SPOT14 family. Homodimer. Heterodimer with MID1IP1. Interacts with THRB and PLAGL1. In terms of tissue distribution, mainly expressed in tissues that synthesize triglycerides.

It is found in the nucleus. The protein localises to the cytoplasm. Plays a role in the regulation of lipogenesis, especially in lactating mammary gland. Important for the biosynthesis of triglycerides with medium-length fatty acid chains. May modulate lipogenesis by interacting with MID1IP1 and preventing its interaction with ACACA. May function as transcriptional coactivator. May modulate the transcription factor activity of THRB. This chain is Thyroid hormone-inducible hepatic protein (THRSP), found in Homo sapiens (Human).